A 544-amino-acid chain; its full sequence is Chaperonin GroEL 1 (544 aa).

ATP-binding positions include 30 to 33 (TLGP), K51, 87 to 91 (DGTTT), G415, 481 to 483 (DAL), and D497.

The protein belongs to the chaperonin (HSP60) family. As to quaternary structure, forms a cylinder of 14 subunits composed of two heptameric rings stacked back-to-back. Interacts with the co-chaperonin GroES.

It is found in the cytoplasm. It catalyses the reaction ATP + H2O + a folded polypeptide = ADP + phosphate + an unfolded polypeptide.. Together with its co-chaperonin GroES, plays an essential role in assisting protein folding. The GroEL-GroES system forms a nano-cage that allows encapsulation of the non-native substrate proteins and provides a physical environment optimized to promote and accelerate protein folding. The polypeptide is Chaperonin GroEL 1 (Chlamydia caviae (strain ATCC VR-813 / DSM 19441 / 03DC25 / GPIC) (Chlamydophila caviae)).